The sequence spans 220 residues: Protein-methionine-sulfoxide reductase heme-binding subunit MsrQ (220 aa).

Transmembrane regions (helical) follow at residues 20-40 (IWLL…LGAS), 52-72 (EHTL…VTPI), 86-106 (ALGL…MVLD), 122-142 (PFIT…LTSN), and 159-179 (LVYV…KSWP).

Belongs to the MsrQ family. Heterodimer of a catalytic subunit (MsrP) and a heme-binding subunit (MsrQ). FMN is required as a cofactor. Heme b serves as cofactor.

It localises to the cell inner membrane. Functionally, part of the MsrPQ system that repairs oxidized periplasmic proteins containing methionine sulfoxide residues (Met-O), using respiratory chain electrons. Thus protects these proteins from oxidative-stress damage caused by reactive species of oxygen and chlorine generated by the host defense mechanisms. MsrPQ is essential for the maintenance of envelope integrity under bleach stress, rescuing a wide series of structurally unrelated periplasmic proteins from methionine oxidation. MsrQ provides electrons for reduction to the reductase catalytic subunit MsrP, using the quinone pool of the respiratory chain. This is Protein-methionine-sulfoxide reductase heme-binding subunit MsrQ from Brucella anthropi (strain ATCC 49188 / DSM 6882 / CCUG 24695 / JCM 21032 / LMG 3331 / NBRC 15819 / NCTC 12168 / Alc 37) (Ochrobactrum anthropi).